The chain runs to 238 residues: ATP synthase subunit a (238 aa).

A run of 5 helical transmembrane segments spans residues 18–38 (MSTV…TFIG), 76–96 (FIVL…LGLP), 117–137 (VLTL…GIKI), 195–215 (LIGM…GLFI), and 216–236 (GAIQ…HKVE).

It belongs to the ATPase A chain family. F-type ATPases have 2 components, CF(1) - the catalytic core - and CF(0) - the membrane proton channel. CF(1) has five subunits: alpha(3), beta(3), gamma(1), delta(1), epsilon(1). CF(0) has three main subunits: a(1), b(2) and c(9-12). The alpha and beta chains form an alternating ring which encloses part of the gamma chain. CF(1) is attached to CF(0) by a central stalk formed by the gamma and epsilon chains, while a peripheral stalk is formed by the delta and b chains.

Its subcellular location is the cell membrane. In terms of biological role, key component of the proton channel; it plays a direct role in the translocation of protons across the membrane. The chain is ATP synthase subunit a from Alkalihalophilus pseudofirmus (strain ATCC BAA-2126 / JCM 17055 / OF4) (Bacillus pseudofirmus).